The sequence spans 39 residues: Photosystem II reaction center protein L (39 aa).

The helical transmembrane segment at 18-38 (SLYLGLLLVFVMGILFSSYFF) threads the bilayer.

It belongs to the PsbL family. In terms of assembly, PSII is composed of 1 copy each of membrane proteins PsbA, PsbB, PsbC, PsbD, PsbE, PsbF, PsbH, PsbI, PsbJ, PsbK, PsbL, PsbM, PsbT, PsbX, PsbY, Psb30/Ycf12, peripheral proteins PsbO, CyanoQ (PsbQ), PsbU, PsbV and a large number of cofactors. It forms dimeric complexes.

The protein resides in the cellular thylakoid membrane. Its function is as follows. One of the components of the core complex of photosystem II (PSII). PSII is a light-driven water:plastoquinone oxidoreductase that uses light energy to abstract electrons from H(2)O, generating O(2) and a proton gradient subsequently used for ATP formation. It consists of a core antenna complex that captures photons, and an electron transfer chain that converts photonic excitation into a charge separation. This subunit is found at the monomer-monomer interface and is required for correct PSII assembly and/or dimerization. The sequence is that of Photosystem II reaction center protein L from Prochlorococcus marinus (strain NATL2A).